A 256-amino-acid chain; its full sequence is Acetyl-coenzyme A carboxylase carboxyl transferase subunit beta 2 (256 aa).

Positions 1–256 (MTVKCNKCKE…LAIHAETVSA (256 aa)) constitute a CoA carboxyltransferase N-terminal domain. Zn(2+)-binding residues include C5, C8, C24, and C27. The segment at 5–27 (CNKCKEEINKEDLEKNYYICPLC) adopts a C4-type zinc-finger fold.

Belongs to the AccD/PCCB family. As to quaternary structure, acetyl-CoA carboxylase is a heterohexamer composed of biotin carboxyl carrier protein (AccB), biotin carboxylase (AccC) and two subunits each of ACCase subunit alpha (AccA) and ACCase subunit beta (AccD). The cofactor is Zn(2+).

It is found in the cytoplasm. It catalyses the reaction N(6)-carboxybiotinyl-L-lysyl-[protein] + acetyl-CoA = N(6)-biotinyl-L-lysyl-[protein] + malonyl-CoA. Its pathway is lipid metabolism; malonyl-CoA biosynthesis; malonyl-CoA from acetyl-CoA: step 1/1. Component of the acetyl coenzyme A carboxylase (ACC) complex. Biotin carboxylase (BC) catalyzes the carboxylation of biotin on its carrier protein (BCCP) and then the CO(2) group is transferred by the transcarboxylase to acetyl-CoA to form malonyl-CoA. The polypeptide is Acetyl-coenzyme A carboxylase carboxyl transferase subunit beta 2 (Lachnospira eligens (strain ATCC 27750 / DSM 3376 / VPI C15-48 / C15-B4) (Eubacterium eligens)).